A 1078-amino-acid chain; its full sequence is mRNA 3'-end-processing protein rna14 (1078 aa).

Disordered stretches follow at residues 15–209 (AMNA…DTPA) and 222–251 (QSEN…HDRV). Polar residues predominate over residues 42–55 (KTLQDQYSASILDS). Low complexity predominate over residues 58–68 (SEIAPSSASPS). Polar residues predominate over residues 82–115 (DPSQPADSAYPSQTPSRADSQASVSAPASGTSVP). Residues 126–139 (VEDEDEDDAGDADY) show a composition bias toward acidic residues. Polar residues-rich tracts occupy residues 151–170 (NTIS…NEDT) and 190–206 (FPNS…SKSD). HAT repeat units follow at residues 280–312 (NRID…MESE), 314–345 (NELY…YVRR), 356–391 (QSRR…FIRS), 405–438 (QKMD…FEMG), 475–508 (TTLP…WEKG), and 520–552 (AFKA…FCFL). 2 disordered regions span residues 632–663 (ETFA…ESMK) and 851–950 (PTVV…QGSP). Residues 879 to 894 (GTPSSRYPDASVTNSP) are compositionally biased toward polar residues. A compositionally biased stretch (basic and acidic residues) spans 896 to 907 (RPLEDFDDEMNR). A compositionally biased stretch (polar residues) spans 931-949 (RTQQVISNQTGSQFRSQGS).

It localises to the nucleus. The protein resides in the cytoplasm. Component of the cleavage factor IA (CFIA) complex, which is involved in the endonucleolytic cleavage during polyadenylation-dependent pre-mRNA 3'-end formation. The sequence is that of mRNA 3'-end-processing protein rna14 (rna14) from Aspergillus oryzae (strain ATCC 42149 / RIB 40) (Yellow koji mold).